The primary structure comprises 309 residues: Ribonuclease Z (309 aa).

Zn(2+) contacts are provided by histidine 63, histidine 65, aspartate 67, histidine 68, histidine 145, aspartate 216, and histidine 274. Aspartate 67 functions as the Proton acceptor in the catalytic mechanism.

Belongs to the RNase Z family. In terms of assembly, homodimer. Zn(2+) serves as cofactor.

It catalyses the reaction Endonucleolytic cleavage of RNA, removing extra 3' nucleotides from tRNA precursor, generating 3' termini of tRNAs. A 3'-hydroxy group is left at the tRNA terminus and a 5'-phosphoryl group is left at the trailer molecule.. Functionally, zinc phosphodiesterase, which displays some tRNA 3'-processing endonuclease activity. Probably involved in tRNA maturation, by removing a 3'-trailer from precursor tRNA. In Streptococcus pyogenes serotype M1, this protein is Ribonuclease Z.